The chain runs to 402 residues: Phosphoglycerate kinase (402 aa).

Residues 24–26, arginine 39, 62–65, arginine 121, and arginine 161 contribute to the substrate site; these read DLN and HLGR. Residues lysine 211, glycine 299, glutamate 330, and 359-362 contribute to the ATP site; that span reads GGDS.

This sequence belongs to the phosphoglycerate kinase family. As to quaternary structure, monomer.

Its subcellular location is the cytoplasm. It catalyses the reaction (2R)-3-phosphoglycerate + ATP = (2R)-3-phospho-glyceroyl phosphate + ADP. The protein operates within carbohydrate degradation; glycolysis; pyruvate from D-glyceraldehyde 3-phosphate: step 2/5. The polypeptide is Phosphoglycerate kinase (Corynebacterium urealyticum (strain ATCC 43042 / DSM 7109)).